The chain runs to 369 residues: Cellular tumor antigen p53 (369 aa).

The tract at residues 1–28 (MAESQEFAELWERNLISTQEAGTCWELI) is transcription activation (acidic). Residues 66 to 256 (DYPGEHGFKL…KTEESNFRKD (191 aa)) mediate DNA binding. The Zn(2+) site is built by cysteine 140, histidine 143, cysteine 202, and cysteine 206. Residues 237–244 (RVCACPGR) are interaction with DNA. Residues 246–263 (RKTEESNFRKDQETKTLD) show a composition bias toward basic and acidic residues. Disordered regions lie at residues 246-296 (RKTE…SGSS) and 318-369 (NDSL…SDSD). Residues 269-281 (NKRSLTKDSTSSV) show a composition bias toward polar residues. Residues 270–289 (KRSLTKDSTSSVPRPEGSKK) carry the Bipartite nuclear localization signal motif. Residues 298–329 (EEIYTLQVRGKERYEMLKKINDSLELSDVVPP) are oligomerization. The Nuclear export signal motif lies at 312-323 (EMLKKINDSLEL). Residues 342–365 (KGKKKDGQTPEPKRGKKLMVKDEK) form a basic (repression of DNA-binding) region. Residues 346–369 (KDGQTPEPKRGKKLMVKDEKSDSD) are compositionally biased toward basic and acidic residues.

The protein belongs to the p53 family. In terms of assembly, binds DNA as a homotetramer. Zn(2+) serves as cofactor.

It localises to the cytoplasm. Its subcellular location is the nucleus. Its function is as follows. Multifunctional transcription factor that induces cell cycle arrest, DNA repair or apoptosis upon binding to its target DNA sequence. Acts as a tumor suppressor in many tumor types; induces growth arrest or apoptosis depending on the physiological circumstances and cell type. Negatively regulates cell division by controlling expression of a set of genes required for this process. One of the activated genes is an inhibitor of cyclin-dependent kinases. Apoptosis induction seems to be mediated either by stimulation of BAX and FAS antigen expression, or by repression of Bcl-2 expression. The protein is Cellular tumor antigen p53 (tp53) of Barbus barbus (Barbel).